Reading from the N-terminus, the 67-residue chain is Probable Sec-independent protein translocase protein TatE (67 aa).

The chain crosses the membrane as a helical span at residues 4–21 (ISITKLLVVAALVVLLFG).

Belongs to the TatA/E family. TatE subfamily.

The protein localises to the cell inner membrane. Its function is as follows. Part of the twin-arginine translocation (Tat) system that transports large folded proteins containing a characteristic twin-arginine motif in their signal peptide across membranes. TatE shares overlapping functions with TatA. This is Probable Sec-independent protein translocase protein TatE from Shigella flexneri.